The sequence spans 263 residues: MQRKQEMMTIVAQKQLAPRIYQLDLQGELVKEMTRPGQFVHIKVPRADLLLRRPISINQIDHSNETCRLIYRVEGAGTEVFATMKAGEQLDILGPLGNGFDITTVAAGQTAFIVGGGIGIPPLYELSKQLNEKGVKVIHFLGYASKEVAYYQQEFMALGETHFATDDGSFGAHGNVGRLLSEALAKGRIPDAVYACGANGMLKAIDSLFPTHPHVYLSLEERMACGIGACYACVCHKKGDTTGAKSVKVCDEGPIFKASEVIL.

The 100-residue stretch at 3-102 folds into the FAD-binding FR-type domain; it reads RKQEMMTIVA…LGPLGNGFDI (100 aa). Residues 53 to 56, 70 to 72, and 77 to 78 each bind FAD; these read RPIS, IYR, and GT. The [2Fe-2S] cluster site is built by C225, C230, C233, and C250.

It belongs to the PyrK family. In terms of assembly, heterotetramer of 2 PyrK and 2 PyrD type B subunits. [2Fe-2S] cluster is required as a cofactor. FAD serves as cofactor.

The protein operates within pyrimidine metabolism; UMP biosynthesis via de novo pathway; orotate from (S)-dihydroorotate (NAD(+) route): step 1/1. In terms of biological role, responsible for channeling the electrons from the oxidation of dihydroorotate from the FMN redox center in the PyrD type B subunit to the ultimate electron acceptor NAD(+). The polypeptide is Dihydroorotate dehydrogenase B (NAD(+)), electron transfer subunit (pyrK) (Enterococcus faecalis (strain ATCC 700802 / V583)).